A 320-amino-acid polypeptide reads, in one-letter code: Tetraspanin-32 (320 aa).

4 consecutive transmembrane segments (helical) span residues 14 to 34, 60 to 80, 90 to 110, and 203 to 223; these read MLVTCFFILLLGLSVATMVTL, WAFSAGLSLVGLLTLGAVLSA, LMAGGFLCFSLAFCAQVQVVF, and SIGLALTVSALLFSSFLWFAI.

This sequence belongs to the tetraspanin (TM4SF) family. Expressed ubiquitously at low levels. High levels of expression are confined to hematopoietic tissues including peripheral blood leukocytes, thymus and spleen.

It is found in the membrane. In Homo sapiens (Human), this protein is Tetraspanin-32 (TSPAN32).